The chain runs to 83 residues: U4-theraphotoxin-Hhn1x (83 aa).

Residues 1 to 20 (MTLIAILTCAAALVLHTTAA) form the signal peptide. Positions 21–46 (EELEAESQLMEVGMPDTELEAVDEER) are excised as a propeptide. 3 disulfide bridges follow: Cys-50–Cys-64, Cys-54–Cys-75, and Cys-69–Cys-80.

This sequence belongs to the neurotoxin 12 (Hwtx-2) family. 02 (Hwtx-2) subfamily. As to expression, expressed by the venom gland.

It localises to the secreted. Functionally, postsynaptic neurotoxin. The polypeptide is U4-theraphotoxin-Hhn1x (Cyriopagopus hainanus (Chinese bird spider)).